We begin with the raw amino-acid sequence, 490 residues long: UDP-N-acetylmuramate--L-alanine ligase (490 aa).

130-136 lines the ATP pocket; that stretch reads GTHGKTT.

It belongs to the MurCDEF family.

It localises to the cytoplasm. It carries out the reaction UDP-N-acetyl-alpha-D-muramate + L-alanine + ATP = UDP-N-acetyl-alpha-D-muramoyl-L-alanine + ADP + phosphate + H(+). The protein operates within cell wall biogenesis; peptidoglycan biosynthesis. Cell wall formation. In Idiomarina loihiensis (strain ATCC BAA-735 / DSM 15497 / L2-TR), this protein is UDP-N-acetylmuramate--L-alanine ligase.